We begin with the raw amino-acid sequence, 165 residues long: Growth arrest and DNA damage-inducible protein GADD45 alpha (165 aa).

Position 2 is a phosphothreonine (T2).

Belongs to the GADD45 family. Interacts with AURKA, PCNA, GADD45GIP1 and MAPK14.

It localises to the nucleus. Functionally, might affect PCNA interaction with some CDK (cell division protein kinase) complexes; stimulates DNA excision repair in vitro and inhibits entry of cells into S phase. In T-cells, functions as a regulator of p38 MAPKs by inhibiting p88 phosphorylation and activity. This Bos taurus (Bovine) protein is Growth arrest and DNA damage-inducible protein GADD45 alpha (GADD45A).